The chain runs to 66 residues: Large ribosomal subunit protein bL33c (66 aa).

It belongs to the bacterial ribosomal protein bL33 family.

Its subcellular location is the plastid. It localises to the chloroplast. The chain is Large ribosomal subunit protein bL33c from Saccharum officinarum (Sugarcane).